Here is a 385-residue protein sequence, read N- to C-terminus: Dual-specificity RNA methyltransferase RlmN (385 aa).

The active-site Proton acceptor is E113. The Radical SAM core domain occupies 120-352 (VGRAGALCVS…NRAGYASPIR (233 aa)). C127 and C363 are oxidised to a cystine. Residues C134, C138, and C141 each coordinate [4Fe-4S] cluster. Residues 189 to 190 (GE), S221, 243 to 245 (SLH), and N320 each bind S-adenosyl-L-methionine. C363 functions as the S-methylcysteine intermediate in the catalytic mechanism.

The protein belongs to the radical SAM superfamily. RlmN family. It depends on [4Fe-4S] cluster as a cofactor.

It localises to the cytoplasm. The catalysed reaction is adenosine(2503) in 23S rRNA + 2 reduced [2Fe-2S]-[ferredoxin] + 2 S-adenosyl-L-methionine = 2-methyladenosine(2503) in 23S rRNA + 5'-deoxyadenosine + L-methionine + 2 oxidized [2Fe-2S]-[ferredoxin] + S-adenosyl-L-homocysteine. It catalyses the reaction adenosine(37) in tRNA + 2 reduced [2Fe-2S]-[ferredoxin] + 2 S-adenosyl-L-methionine = 2-methyladenosine(37) in tRNA + 5'-deoxyadenosine + L-methionine + 2 oxidized [2Fe-2S]-[ferredoxin] + S-adenosyl-L-homocysteine. In terms of biological role, specifically methylates position 2 of adenine 2503 in 23S rRNA and position 2 of adenine 37 in tRNAs. m2A2503 modification seems to play a crucial role in the proofreading step occurring at the peptidyl transferase center and thus would serve to optimize ribosomal fidelity. The sequence is that of Dual-specificity RNA methyltransferase RlmN from Phenylobacterium zucineum (strain HLK1).